The sequence spans 65 residues: MEARVLLLCAVLFLLVHTPPAAGGLNNKCAYFRGQCRRKCPQRDIFFGFCRNHDQCCLSSLHTRH.

The signal sequence occupies residues 1–23 (MEARVLLLCAVLFLLVHTPPAAG). 3 disulfide bridges follow: Cys-29/Cys-56, Cys-36/Cys-50, and Cys-40/Cys-57.

The protein belongs to the beta-defensin family. In terms of tissue distribution, lowly expressed in spleen, and lung.

Its subcellular location is the secreted. Functionally, has antimicrobial activity. The protein is Defensin-B2 of Ornithorhynchus anatinus (Duckbill platypus).